Consider the following 286-residue polypeptide: Probable ketoamine kinase EAE_16955 (286 aa).

Position 92 to 94 (92 to 94 (EYL)) interacts with ATP. Aspartate 194 functions as the Proton acceptor in the catalytic mechanism.

It belongs to the fructosamine kinase family.

Ketoamine kinase that phosphorylates ketoamines on the third carbon of the sugar moiety to generate ketoamine 3-phosphate. The polypeptide is Probable ketoamine kinase EAE_16955 (Klebsiella aerogenes (strain ATCC 13048 / DSM 30053 / CCUG 1429 / JCM 1235 / KCTC 2190 / NBRC 13534 / NCIMB 10102 / NCTC 10006 / CDC 819-56) (Enterobacter aerogenes)).